Consider the following 177-residue polypeptide: METIHATTILSVRKNGKIAVGGDGQVSMGNTVMKHTAKKVRRLYNGKVIAGFAGSAADAFTLFELFEKKLIEHGGSVSRAAVELAREWRMDRMLRRLEALLIVCDANESFLISGTGDVISPDDGVLAIGSGGNFALSAARALVENTDLDPKEIITKAMNITADICIYTNHNLVIEEL.

Thr-7 is a catalytic residue. Residues Ala-162, Cys-165, and Thr-168 each contribute to the Na(+) site.

Belongs to the peptidase T1B family. HslV subfamily. As to quaternary structure, a double ring-shaped homohexamer of HslV is capped on each side by a ring-shaped HslU homohexamer. The assembly of the HslU/HslV complex is dependent on binding of ATP.

It is found in the cytoplasm. The catalysed reaction is ATP-dependent cleavage of peptide bonds with broad specificity.. Allosterically activated by HslU binding. Protease subunit of a proteasome-like degradation complex believed to be a general protein degrading machinery. The chain is ATP-dependent protease subunit HslV from Leptospira biflexa serovar Patoc (strain Patoc 1 / Ames).